We begin with the raw amino-acid sequence, 569 residues long: Estrogen receptor (569 aa).

The interval 1 to 151 (MYPKEEHSAG…GFDSGKETRF (151 aa)) is modulating. Over residues 28 to 37 (PTQTFGTSSP) the composition is skewed to polar residues. Residues 28-65 (PTQTFGTSSPAEPASVGYYPAPPDPHEEHLQTLGGGSS) form a disordered region. 2 consecutive NR C4-type zinc fingers follow at residues 152 to 172 (CAVCSDYASGYHYGVWSCEGC) and 188 to 212 (CPATNQCTIDRNRRKSCQACRLRKC). The segment at residues 152 to 217 (CAVCSDYASG…RLRKCYEVGM (66 aa)) is a DNA-binding region (nuclear receptor). Residues 218–278 (MKGGIRKDRG…SGGVVSTLCM (61 aa)) form a hinge region. The interval 223 to 271 (RKDRGGRSVRRERRRSSNEDRDKSSSDQCSRAGVRTTGPQDKRKKRSGG) is disordered. The segment covering 237–247 (RSSNEDRDKSS) has biased composition (basic and acidic residues). The region spanning 279-515 (SPDQVLLLLL…DLLLEMLDAQ (237 aa)) is the NR LBD domain. Residues 523-532 (VQRVWSQSEK) show a composition bias toward polar residues. The interval 523-569 (VQRVWSQSEKNPPSTPTTSSSSSNNSPRGGAAAIQSNGACHSHSPDP) is disordered. Over residues 538 to 549 (PTTSSSSSNNSP) the composition is skewed to low complexity.

Belongs to the nuclear hormone receptor family. NR3 subfamily. In terms of assembly, binds DNA as a homodimer. Can form a heterodimer with ER-beta.

It is found in the nucleus. Functionally, the steroid hormones and their receptors are involved in the regulation of eukaryotic gene expression and affect cellular proliferation and differentiation in target tissues. In Danio rerio (Zebrafish), this protein is Estrogen receptor (esr1).